Reading from the N-terminus, the 318-residue chain is Homeobox-leucine zipper protein ATHB-4 (318 aa).

Disordered stretches follow at residues 1–23 (MGERDDGLGLSLSLGNSQQKEPS) and 128–165 (ARGGDENEAERASCSRGGGSGGSDDEDGGNGDGSRKKL). Positions 8–17 (LGLSLSLGNS) are enriched in low complexity. Basic and acidic residues predominate over residues 128–140 (ARGGDENEAERAS). Positions 160 to 219 (GSRKKLRLSKDQALVLEETFKEHSTLNPKQKLALAKQLNLRARQVEVWFQNRRARTKLKQ) form a DNA-binding region, homeobox. Residues 227–248 (LKRCCDNLTEENRRLQKEVSEL) are leucine-zipper.

Belongs to the HD-ZIP homeobox family. Class II subfamily.

It localises to the nucleus. In terms of biological role, probable transcription factor. In Arabidopsis thaliana (Mouse-ear cress), this protein is Homeobox-leucine zipper protein ATHB-4 (ATHB-4).